Here is a 465-residue protein sequence, read N- to C-terminus: Trigger factor (465 aa).

Residues 163–248 enclose the PPIase FKBP-type domain; that stretch reads GDVINFNFKG…INKIKENQPA (86 aa). Positions 431–465 are disordered; that stretch reads EIVNKNQNDNEIEQDKEQKDNNEEKIKQENNLENK. Residues 443–465 show a composition bias toward basic and acidic residues; that stretch reads EQDKEQKDNNEEKIKQENNLENK.

Belongs to the FKBP-type PPIase family. Tig subfamily.

The protein resides in the cytoplasm. It catalyses the reaction [protein]-peptidylproline (omega=180) = [protein]-peptidylproline (omega=0). Its function is as follows. Involved in protein export. Acts as a chaperone by maintaining the newly synthesized protein in an open conformation. Functions as a peptidyl-prolyl cis-trans isomerase. This is Trigger factor from Mesomycoplasma hyopneumoniae (strain J / ATCC 25934 / NCTC 10110) (Mycoplasma hyopneumoniae).